Here is a 230-residue protein sequence, read N- to C-terminus: Orotidine 5'-phosphate decarboxylase (230 aa).

Residues D11, K34, 61 to 70 (DLKLHDIPNT), T117, R179, Q188, G208, and R209 each bind substrate. Catalysis depends on K63, which acts as the Proton donor.

Belongs to the OMP decarboxylase family. Type 1 subfamily. In terms of assembly, homodimer.

The catalysed reaction is orotidine 5'-phosphate + H(+) = UMP + CO2. Its pathway is pyrimidine metabolism; UMP biosynthesis via de novo pathway; UMP from orotate: step 2/2. In terms of biological role, catalyzes the decarboxylation of orotidine 5'-monophosphate (OMP) to uridine 5'-monophosphate (UMP). The polypeptide is Orotidine 5'-phosphate decarboxylase (Streptococcus pyogenes serotype M28 (strain MGAS6180)).